We begin with the raw amino-acid sequence, 352 residues long: N-terminal EF-hand calcium-binding protein 1 (352 aa).

At S4 the chain carries Phosphoserine. EF-hand domains follow at residues 26-61 and 60-95; these read KGMS…GVLS and LSGE…HLGE. D39, N41, D43, K45, and E50 together coordinate Ca(2+). A coiled-coil region spans residues 135-163; that stretch reads LLKETLNQLQSLQNSLECAMETTEEQTRQ. The disordered stretch occupies residues 180–202; it reads GKRSSRRVQRHNSFSPNSPQFNV. Over residues 190–202 the composition is skewed to polar residues; it reads HNSFSPNSPQFNV. A phosphoserine mark is found at S192 and S197. A coiled-coil region spans residues 209 to 275; it reads EEDNQWMTQI…EEFQLALKHY (67 aa). The ABM domain occupies 252 to 340; sequence MLVQRQMSVI…LETPELTSTM (89 aa).

As to quaternary structure, interacts with STX1. May interact with CPNE6.

Its subcellular location is the cytoplasm. The polypeptide is N-terminal EF-hand calcium-binding protein 1 (NECAB1) (Pongo abelii (Sumatran orangutan)).